We begin with the raw amino-acid sequence, 94 residues long: Transcription factor CPC (94 aa).

The S1, required for cell-to-cell movements stretch occupies residues 1-10 (MFRSDKAEKM). Residues 1-11 (MFRSDKAEKMD) show a composition bias toward basic and acidic residues. The tract at residues 1–25 (MFRSDKAEKMDKRRRRQSKAKASCS) is disordered. The Myb-like domain maps to 30 to 80 (SIEWEAVKMSEEEEDLISRMYKLVGDRWELIAGRIPGRTPEEIERYWLMKH). The interval 76-79 (WLMK) is S2, required for cell-to-cell movements and nuclear localization.

In terms of assembly, interacts with GL3 and BHLH2. Interacts with SIEL. Expressed in trichomes and in young developing leaves, as well as in root hair and stele cells (pericycle and vascular tissues). Expressed in epidermal root hairless cells (atrichoblasts) and moves to root hair cells (trichoblasts) by a cell-to-cell movement through plasmodesmata (at protein level).

The protein localises to the nucleus. In terms of biological role, transcription factor. Determines the fate of epidermal cell differentiation. Represses trichome development by lateral inhibition. Together with GL3 or BHLH2, promotes the formation of hair developing cells (H position) in root epidermis, probably by inhibiting non-hair cell formation. Represses the expression of GL2 and WER in H cells. Positively regulates stomatal formation in the hypocotyl. The polypeptide is Transcription factor CPC (CPC) (Arabidopsis thaliana (Mouse-ear cress)).